The chain runs to 193 residues: Probable DNA-directed RNA polymerase subunit delta (193 aa).

Positions 14–83 constitute an HTH HARE-type domain; the sequence is LSMIEVARAI…GENKWGLRSW (70 aa). Composition is skewed to acidic residues over residues 117–134 and 142–193; these read GDDD…DEDN and EYDD…VVDE. A disordered region spans residues 117–193; sequence GDDDAIDYGH…EYSDEEVVDE (77 aa).

The protein belongs to the RpoE family. RNAP is composed of a core of 2 alpha, a beta and a beta' subunits. The core is associated with a delta subunit and one of several sigma factors.

Functionally, participates in both the initiation and recycling phases of transcription. In the presence of the delta subunit, RNAP displays an increased specificity of transcription, a decreased affinity for nucleic acids, and an increased efficiency of RNA synthesis because of enhanced recycling. This Streptococcus suis (strain 05ZYH33) protein is Probable DNA-directed RNA polymerase subunit delta.